The sequence spans 213 residues: Receptor-binding cancer antigen expressed on SiSo cells (213 aa).

At 1-6 (MAITQF) the chain is on the extracellular side. A helical; Signal-anchor for type III membrane protein membrane pass occupies residues 7 to 27 (RLFKFCTCLATVFSFLKRLIC). The Cytoplasmic portion of the chain corresponds to 28 to 213 (RSGRGRKLSG…EQNKIGVKLS (186 aa)). S36 is subject to Phosphoserine. The residue at position 41 (T41) is a Phosphothreonine. Y94 carries the phosphotyrosine modification. Residues 163–211 (EDAAWQAEEVLRQQKLADREKRAAEQQRKKMEKEAQRLMKKEQNKIGVK) are a coiled coil. A compositionally biased stretch (basic and acidic residues) spans 178-206 (LADREKRAAEQQRKKMEKEAQRLMKKEQN). A disordered region spans residues 178-213 (LADREKRAAEQQRKKMEKEAQRLMKKEQNKIGVKLS).

As to quaternary structure, homodimer. Widely expressed. Expressed in ovary, testis, prostate, thymus, muscle and heart, but not in small intestine, colon, lymph nodes, or peripherical blood lymphocytes. The protein is not detected in any of the above organs.

It localises to the golgi apparatus membrane. Functionally, may participate in suppression of cell proliferation and induces apoptotic cell death through activation of interleukin-1-beta converting enzyme (ICE)-like proteases. The polypeptide is Receptor-binding cancer antigen expressed on SiSo cells (EBAG9) (Homo sapiens (Human)).